The primary structure comprises 218 residues: Lipoprotein-releasing system ATP-binding protein LolD (218 aa).

The 217-residue stretch at 2-218 (IKLEGITKSF…HMVDGTIKKD (217 aa)) folds into the ABC transporter domain. 34 to 41 (GPSGAGKT) contributes to the ATP binding site.

It belongs to the ABC transporter superfamily. Lipoprotein translocase (TC 3.A.1.125) family. In terms of assembly, the complex is composed of two ATP-binding proteins (LolD) and two transmembrane proteins (LolC and LolE).

It localises to the cell inner membrane. Its function is as follows. Part of the ABC transporter complex LolCDE involved in the translocation of mature outer membrane-directed lipoproteins, from the inner membrane to the periplasmic chaperone, LolA. Responsible for the formation of the LolA-lipoprotein complex in an ATP-dependent manner. This Bacteroides thetaiotaomicron (strain ATCC 29148 / DSM 2079 / JCM 5827 / CCUG 10774 / NCTC 10582 / VPI-5482 / E50) protein is Lipoprotein-releasing system ATP-binding protein LolD.